The sequence spans 199 residues: MEVHEVEMVMSAVAASQYPTDQLPEIALSGRSNVGKSSLINKLINRKSYARTSSKPGKTQTLNFYRVENELYFVDVPGYGYAKVSKKQREKFGQIIEAYLTNRDNLRGLISLIDGRHEPTDDDIAMYVFAKYYDIPVLVVATKMDKISTGKWNRQEKIIKEALDFNPVDKFVCFSALTGAGKDTVWEWIEQQCDIGGRR.

In terms of domain architecture, EngB-type G spans Gln-22–Ile-195. GTP contacts are provided by residues Gly-30–Ser-37, Gly-57–Thr-61, Asp-75–Gly-78, Thr-142–Asp-145, and Phe-174–Ala-176. Mg(2+)-binding residues include Ser-37 and Thr-59.

Belongs to the TRAFAC class TrmE-Era-EngA-EngB-Septin-like GTPase superfamily. EngB GTPase family. The cofactor is Mg(2+).

In terms of biological role, necessary for normal cell division and for the maintenance of normal septation. The protein is Probable GTP-binding protein EngB of Latilactobacillus sakei subsp. sakei (strain 23K) (Lactobacillus sakei subsp. sakei).